A 290-amino-acid polypeptide reads, in one-letter code: ATP synthase gamma chain (290 aa).

The protein belongs to the ATPase gamma chain family. In terms of assembly, F-type ATPases have 2 components, CF(1) - the catalytic core - and CF(0) - the membrane proton channel. CF(1) has five subunits: alpha(3), beta(3), gamma(1), delta(1), epsilon(1). CF(0) has three main subunits: a, b and c.

The protein resides in the cell inner membrane. Its function is as follows. Produces ATP from ADP in the presence of a proton gradient across the membrane. The gamma chain is believed to be important in regulating ATPase activity and the flow of protons through the CF(0) complex. The sequence is that of ATP synthase gamma chain from Dictyoglomus turgidum (strain DSM 6724 / Z-1310).